The following is a 189-amino-acid chain: Peptidyl-tRNA hydrolase (189 aa).

A tRNA-binding site is contributed by Y14. H19 serves as the catalytic Proton acceptor. 3 residues coordinate tRNA: F64, N66, and N112.

It belongs to the PTH family. As to quaternary structure, monomer.

The protein resides in the cytoplasm. The catalysed reaction is an N-acyl-L-alpha-aminoacyl-tRNA + H2O = an N-acyl-L-amino acid + a tRNA + H(+). In terms of biological role, hydrolyzes ribosome-free peptidyl-tRNAs (with 1 or more amino acids incorporated), which drop off the ribosome during protein synthesis, or as a result of ribosome stalling. Functionally, catalyzes the release of premature peptidyl moieties from peptidyl-tRNA molecules trapped in stalled 50S ribosomal subunits, and thus maintains levels of free tRNAs and 50S ribosomes. The chain is Peptidyl-tRNA hydrolase from Zymomonas mobilis subsp. mobilis (strain ATCC 31821 / ZM4 / CP4).